Here is a 249-residue protein sequence, read N- to C-terminus: Ubiquinone biosynthesis O-methyltransferase (249 aa).

S-adenosyl-L-methionine-binding residues include arginine 44, glycine 75, aspartate 96, and methionine 138.

This sequence belongs to the methyltransferase superfamily. UbiG/COQ3 family.

It catalyses the reaction a 3-demethylubiquinol + S-adenosyl-L-methionine = a ubiquinol + S-adenosyl-L-homocysteine + H(+). The catalysed reaction is a 3-(all-trans-polyprenyl)benzene-1,2-diol + S-adenosyl-L-methionine = a 2-methoxy-6-(all-trans-polyprenyl)phenol + S-adenosyl-L-homocysteine + H(+). It participates in cofactor biosynthesis; ubiquinone biosynthesis. Its function is as follows. O-methyltransferase that catalyzes the 2 O-methylation steps in the ubiquinone biosynthetic pathway. The protein is Ubiquinone biosynthesis O-methyltransferase of Paramagnetospirillum magneticum (strain ATCC 700264 / AMB-1) (Magnetospirillum magneticum).